We begin with the raw amino-acid sequence, 317 residues long: tRNA dimethylallyltransferase (317 aa).

Residue Gly-19–Ser-26 coordinates ATP. Substrate is bound at residue Thr-21–Ser-26. Positions Asp-49–Gln-52 are interaction with substrate tRNA.

The protein belongs to the IPP transferase family. In terms of assembly, monomer. It depends on Mg(2+) as a cofactor.

The catalysed reaction is adenosine(37) in tRNA + dimethylallyl diphosphate = N(6)-dimethylallyladenosine(37) in tRNA + diphosphate. Functionally, catalyzes the transfer of a dimethylallyl group onto the adenine at position 37 in tRNAs that read codons beginning with uridine, leading to the formation of N6-(dimethylallyl)adenosine (i(6)A). This is tRNA dimethylallyltransferase from Erythrobacter litoralis (strain HTCC2594).